The following is a 206-amino-acid chain: FMN-dependent NADH:quinone oxidoreductase 4 (206 aa).

FMN is bound by residues serine 10 and 136 to 139 (SSGG).

This sequence belongs to the azoreductase type 1 family. Homodimer. It depends on FMN as a cofactor.

It catalyses the reaction 2 a quinone + NADH + H(+) = 2 a 1,4-benzosemiquinone + NAD(+). It carries out the reaction N,N-dimethyl-1,4-phenylenediamine + anthranilate + 2 NAD(+) = 2-(4-dimethylaminophenyl)diazenylbenzoate + 2 NADH + 2 H(+). In terms of biological role, quinone reductase that provides resistance to thiol-specific stress caused by electrophilic quinones. Also exhibits azoreductase activity. Catalyzes the reductive cleavage of the azo bond in aromatic azo compounds to the corresponding amines. The sequence is that of FMN-dependent NADH:quinone oxidoreductase 4 from Pseudomonas fluorescens (strain ATCC BAA-477 / NRRL B-23932 / Pf-5).